A 214-amino-acid chain; its full sequence is Large ribosomal subunit protein uL16 (214 aa).

The residue at position 32 (Arg32) is a Citrulline. Lys175 participates in a covalent cross-link: Glycyl lysine isopeptide (Lys-Gly) (interchain with G-Cter in SUMO2). Residue Lys188 forms a Glycyl lysine isopeptide (Lys-Gly) (interchain with G-Cter in ubiquitin) linkage.

The protein belongs to the universal ribosomal protein uL16 family. In terms of assembly, component of the large ribosomal subunit. Mature ribosomes consist of a small (40S) and a large (60S) subunit. The 40S subunit contains about 33 different proteins and 1 molecule of RNA (18S). The 60S subunit contains about 49 different proteins and 3 molecules of RNA (28S, 5.8S and 5S). In terms of processing, citrullinated by PADI4. Ufmylated by UFL1.

The protein localises to the cytoplasm. In terms of biological role, component of the large ribosomal subunit. Plays a role in the formation of actively translating ribosomes. May play a role in the embryonic brain development. This Rattus norvegicus (Rat) protein is Large ribosomal subunit protein uL16.